A 440-amino-acid chain; its full sequence is Microtubule-associated tumor suppressor 1 homolog (440 aa).

Residues 106 to 401 (IQHLLSEREE…RLSMENEELL (296 aa)) adopt a coiled-coil conformation. Ser-373, Ser-394, Ser-415, Ser-425, Ser-429, Ser-431, Ser-433, Ser-434, and Ser-438 each carry phosphoserine. The interval 407–440 (GDLCSPKRSPTSSAIPFQSPRNSGSFSSPSISPR) is disordered. A compositionally biased stretch (low complexity) spans 425-440 (SPRNSGSFSSPSISPR).

Belongs to the MTUS1 family. In terms of assembly, homodimer. Interacts with AGTR2. Interacts with PTPN6. As to expression, present in neurons (at protein level).

Its subcellular location is the mitochondrion. The protein localises to the golgi apparatus. It is found in the cell membrane. The protein resides in the nucleus. Its function is as follows. Cooperates with AGTR2 to inhibit ERK2 activation and cell proliferation. May be required for AGTR2 cell surface expression. Together with PTPN6, induces UBE2V2 expression upon angiotensin-II stimulation. In Rattus norvegicus (Rat), this protein is Microtubule-associated tumor suppressor 1 homolog (Mtus1).